A 698-amino-acid chain; its full sequence is 4-hydroxybutyrate--CoA ligase [ADP-forming] (698 aa).

The 54-residue stretch at 491 to 544 folds into the ATP-grasp domain; the sequence is QEVLKAYGLPLPKSTLAKNEAEAVKAAKKIGYPVVMKIASPQIIHKSDAGGVKV. Position 517 to 544 (517 to 544) interacts with ATP; it reads AKKIGYPVVMKIASPQIIHKSDAGGVKV.

In the N-terminal section; belongs to the acetate CoA ligase alpha subunit family. This sequence in the C-terminal section; belongs to the acetate CoA ligase beta subunit family. The cofactor is Mg(2+). It depends on Mn(2+) as a cofactor.

The enzyme catalyses 4-hydroxybutanoate + ATP + CoA = 4-hydroxybutanoyl-CoA + ADP + phosphate. Its function is as follows. Involved in thaumarchaeal hydroxypropionate/hydroxybutyrate (HP/HB) cycle, a modified version of the autotrophic HP/HB cycle of Crenarchaeota. Catalyzes the formation of 4-hydroxybutyryl-CoA, ADP and phosphate from 4-hydroxybutyrate, coenzyme A (CoA) and ATP. Can also use acetate, propionate and butyrate, with poor catalytic efficiency. The protein is 4-hydroxybutyrate--CoA ligase [ADP-forming] of Nitrosopumilus maritimus (strain SCM1).